A 586-amino-acid polypeptide reads, in one-letter code: Ezrin (586 aa).

The 294-residue stretch at 2–295 (PKPINVRVTT…GNHELYMRRR (294 aa)) folds into the FERM domain. An N6-acetyllysine modification is found at lysine 60. Positions 115–120 (IYCPPE) match the [IL]-x-C-x-x-[DE] motif motif. Tyrosine 146 carries the post-translational modification Phosphotyrosine; by PDGFR. An interaction with SCYL3 region spans residues 244–586 (EIRNISFNDK…KQRIDEFEAM (343 aa)). A coiled-coil region spans residues 302-462 (VQQMKAQARE…QDDLVKTKEE (161 aa)). The tract at residues 306-338 (KAQAREEKHQKQLERQQLETEKKRRETVEREKE) is disordered. Residues 308–338 (QAREEKHQKQLERQQLETEKKRRETVEREKE) are compositionally biased toward basic and acidic residues. Residue tyrosine 354 is modified to Phosphotyrosine; by PDGFR. Serine 366 carries the post-translational modification Phosphoserine. Phosphotyrosine is present on tyrosine 478. The disordered stretch occupies residues 534–565 (LSNELSQARDENKRTHNDIIHNENMRQGRDKY). Phosphoserine is present on serine 535. Basic and acidic residues predominate over residues 540–565 (QARDENKRTHNDIIHNENMRQGRDKY). Threonine 567 is modified (phosphothreonine; by ROCK2 and PKC/PRKCI).

Interacts with PALS1 and NHERF2. Found in a complex with EZR, PODXL and NHERF2. Interacts with MCC, PLEKHG6, PODXL, SCYL3/PACE1, NHERF1 and TMEM8B. Interacts (when phosphorylated) with FES/FPS. Interacts with dimeric S100P, the interaction may be activating through unmasking of F-actin binding sites. Identified in complexes that contain VIM, EZR, AHNAK, BFSP1, BFSP2, ANK2, PLEC, PRX and spectrin. Detected in a complex composed of at least EZR, AHNAK, PPL and PRX. Interacts with PDPN (via cytoplasmic domain); activates RHOA and promotes epithelial-mesenchymal transition. Interacts with SPN/CD43 cytoplasmic tail. Interacts with CD44 and ICAM2. Interacts with SLC9A3; interaction targets SLC9A3 to the apical membrane. Interacts with SLC9A1; regulates interactions of SLC9A1 with cytoskeletal and promotes stress fiber formation. Interacts with CLIC5; may work together in a complex which also includes RDX and MYO6 to stabilize linkages between the plasma membrane and subjacent actin cytoskeleton at the base of stereocilia. Phosphorylated by tyrosine-protein kinases. Phosphorylation by ROCK2 suppresses the head-to-tail association of the N-terminal and C-terminal halves resulting in an opened conformation which is capable of actin and membrane-binding. Post-translationally, S-nitrosylation is induced by interferon-gamma and oxidatively-modified low-densitity lipoprotein (LDL(ox)) possibly implicating the iNOS-S100A8/9 transnitrosylase complex. As to expression, detected in eye lens fiber cells. Expressed in cerebrum and cerebellum (at protein level). Component of the microvilli of intestinal epithelial cells.

The protein resides in the apical cell membrane. It localises to the cell projection. It is found in the microvillus membrane. Its subcellular location is the ruffle membrane. The protein localises to the cytoplasm. The protein resides in the cell cortex. It localises to the cytoskeleton. It is found in the microvillus. A head-to-tail association, of the N-terminal and C-terminal halves results in a closed conformation (inactive form) which is incapable of actin or membrane-binding. Its function is as follows. Probably involved in connections of major cytoskeletal structures to the plasma membrane. In epithelial cells, required for the formation of microvilli and membrane ruffles on the apical pole. Along with PLEKHG6, required for normal macropinocytosis. The chain is Ezrin (Ezr) from Mus musculus (Mouse).